The primary structure comprises 350 residues: Methionine import ATP-binding protein MetN (350 aa).

Positions 2–242 (IELKGISQHF…PRHDVTRALI (241 aa)) constitute an ABC transporter domain. 39 to 46 (GRSGAGKS) is a binding site for ATP.

Belongs to the ABC transporter superfamily. Methionine importer (TC 3.A.1.24) family. The complex is composed of two ATP-binding proteins (MetN), two transmembrane proteins (MetI) and a solute-binding protein (MetQ).

Its subcellular location is the cell inner membrane. It catalyses the reaction L-methionine(out) + ATP + H2O = L-methionine(in) + ADP + phosphate + H(+). It carries out the reaction D-methionine(out) + ATP + H2O = D-methionine(in) + ADP + phosphate + H(+). In terms of biological role, part of the ABC transporter complex MetNIQ involved in methionine import. Responsible for energy coupling to the transport system. This chain is Methionine import ATP-binding protein MetN, found in Ralstonia nicotianae (strain ATCC BAA-1114 / GMI1000) (Ralstonia solanacearum).